Consider the following 2264-residue polypeptide: RNA1 polyprotein (2264 aa).

The Cytoplasmic segment spans residues Met-566–Gly-1156. Residues Thr-750 to Pro-916 form the SF3 helicase domain. Gly-780–Ser-787 lines the ATP pocket. The helical transmembrane segment at Cys-1157–Trp-1177 threads the bilayer. The Lumenal portion of the chain corresponds to Lys-1178–Lys-1203. A Peptidase C3 domain is found at Ala-1227–Leu-1436. Active-site for picornain 3C-like protease activity residues include His-1270, Glu-1308, and Cys-1400. The region spanning Asn-1713 to Phe-1841 is the RdRp catalytic domain.

It belongs to the nepoviruses RNA1 polyprotein family. Post-translationally, specific enzymatic cleavages by picornain 3C-like protease in vivo yield mature proteins. Picornain 3C-like protease is autocatalytically processed. In terms of processing, VPg is uridylylated by the polymerase and is covalently linked to the 5'-end of genomic RNA. This uridylylated form acts as a nucleotide-peptide primer for the polymerase.

The protein resides in the host endoplasmic reticulum lumen. Its subcellular location is the host endoplasmic reticulum membrane. The enzyme catalyses RNA(n) + a ribonucleoside 5'-triphosphate = RNA(n+1) + diphosphate. Picornain 3C-like protease is a thiol protease that cleaves the P1 and P2 polyproteins. This chain is RNA1 polyprotein, found in Beet ringspot virus (BRSV).